A 360-amino-acid polypeptide reads, in one-letter code: MPSTLQALTKKVLATQPIFKDDYCILERCGLWWHEAPITIHHTCIDKQILVKTASFKHGLTLNVALMKAVQENNHDLIELFTEWGADISFGLVTVNMECTQDLCQKLGARKALSENKILEIFYNVKYVKTSSNIILCHELLSNNPLFLNNAQLKLRIFGELDALSINITLDNISFNEMLTRYWYSMAILYKLTEAIQYFYQRYSHFKDWRLICGVAYNNVFDLHEIYNKEKTNIDIDEMMQLACMYDGNYTTIYYCCMLGADINRAMITSVMNFCEGNLFLCIDLGADAFKESIEIASQANNWILINILLFKNYSPDSSLLSLKTTDPEKINVLLDEEKYKSKNMLMYEESLFHIYGTNT.

It belongs to the asfivirus MGF 360 family.

Its function is as follows. Plays a role in virus cell tropism, and may be required for efficient virus replication in macrophages. This is Protein MGF 360-1L from Ornithodoros (relapsing fever ticks).